A 245-amino-acid polypeptide reads, in one-letter code: Lactate utilization protein A (245 aa).

The protein belongs to the LutA/YkgE family.

In terms of biological role, is involved in L-lactate degradation and allows cells to grow with lactate as the sole carbon source. This chain is Lactate utilization protein A, found in Exiguobacterium sp. (strain ATCC BAA-1283 / AT1b).